The sequence spans 259 residues: HTH-type transcriptional regulator Rv1719 (259 aa).

One can recognise an HTH iclR-type domain in the interval 13-75 (IQVIARAAEL…GARGPYRLGP (63 aa)). Residues 35–54 (QAEIGERVGMARSTVSRILN) constitute a DNA-binding region (H-T-H motif). An IclR-ED domain is found at 88–259 (VVTEMHPFLT…AWFNGTEDRK (172 aa)).

As to quaternary structure, homodimer.

Functionally, binds to the upstream region of Rv1714 and probably modulates the expression of the downstream gene(s). This Mycobacterium tuberculosis (strain ATCC 25618 / H37Rv) protein is HTH-type transcriptional regulator Rv1719.